The following is a 250-amino-acid chain: Anamorsin homolog 2 (250 aa).

The interval 1–102 (MNLKITINQQ…QTKKINIPQQ (102 aa)) is N-terminal SAM-like domain. The interval 102 to 149 (QDFNNCYGKYDYIEQKFQNQINFFKQVDLKGNQETIDENELLNDGVEV) is linker. 4 residues coordinate [2Fe-2S] cluster: Cys155, Cys162, Cys165, and Cys167. Residues 155–167 (CASKPRACANCTC) are fe-S binding site A. Positions 193, 196, 204, and 207 each coordinate [4Fe-4S] cluster. 2 short sequence motifs (cx2C motif) span residues 193–196 (CGSC) and 204–207 (CANC). The fe-S binding site B stretch occupies residues 193-207 (CGSCYLGDAFRCANC).

The protein belongs to the anamorsin family. As to quaternary structure, monomer. It depends on [2Fe-2S] cluster as a cofactor. [4Fe-4S] cluster is required as a cofactor.

It localises to the cytoplasm. The protein localises to the mitochondrion intermembrane space. Functionally, component of the cytosolic iron-sulfur (Fe-S) protein assembly (CIA) machinery. Required for the maturation of extramitochondrial Fe-S proteins. Part of an electron transfer chain functioning in an early step of cytosolic Fe-S biogenesis, facilitating the de novo assembly of a [4Fe-4S] cluster on the cytosolic Fe-S scaffold complex. Electrons are transferred from NADPH via a FAD- and FMN-containing diflavin oxidoreductase. Together with the diflavin oxidoreductase, also required for the assembly of the diferric tyrosyl radical cofactor of ribonucleotide reductase (RNR), probably by providing electrons for reduction during radical cofactor maturation in the catalytic small subunit. This is Anamorsin homolog 2 from Paramecium tetraurelia.